The primary structure comprises 696 residues: DNA-directed RNA polymerase subunit beta N-terminal section (696 aa).

The protein belongs to the RNA polymerase beta chain family. In terms of assembly, in plastids the minimal PEP RNA polymerase catalytic core is composed of four subunits: alpha, beta, beta', and beta''. When a (nuclear-encoded) sigma factor is associated with the core the holoenzyme is formed, which can initiate transcription.

It is found in the plastid. The protein resides in the chloroplast. It carries out the reaction RNA(n) + a ribonucleoside 5'-triphosphate = RNA(n+1) + diphosphate. In terms of biological role, DNA-dependent RNA polymerase catalyzes the transcription of DNA into RNA using the four ribonucleoside triphosphates as substrates. This is DNA-directed RNA polymerase subunit beta N-terminal section (rpoB1) from Stigeoclonium helveticum (Green alga).